The chain runs to 185 residues: Elongation factor P (185 aa).

It belongs to the elongation factor P family.

The protein localises to the cytoplasm. Its pathway is protein biosynthesis; polypeptide chain elongation. Functionally, involved in peptide bond synthesis. Stimulates efficient translation and peptide-bond synthesis on native or reconstituted 70S ribosomes in vitro. Probably functions indirectly by altering the affinity of the ribosome for aminoacyl-tRNA, thus increasing their reactivity as acceptors for peptidyl transferase. This Pelotomaculum thermopropionicum (strain DSM 13744 / JCM 10971 / SI) protein is Elongation factor P.